We begin with the raw amino-acid sequence, 201 residues long: MSLSDSPSKSGNTGKDLISNNEAKNHEDEETHQKKRRRRTTDAEATLLEQYFLKTPKPSLIERQELSKKLKSSMTPRELQIWFQNKRQSLRRSNCLSRNRLEGTGENSLLRRKSTLTLCETSTGQAELFFQSWPLHSQSVVGEMIHHEQDDYNKENKQQKVVDTTKDISRGSNGNEDSAAHQELEECARSLVELQQQCNDH.

A compositionally biased stretch (polar residues) spans 1 to 22 (MSLSDSPSKSGNTGKDLISNNE). The interval 1–42 (MSLSDSPSKSGNTGKDLISNNEAKNHEDEETHQKKRRRRTTD) is disordered. Positions 23–32 (AKNHEDEETH) are enriched in basic and acidic residues. The segment at residues 33-92 (QKKRRRRTTDAEATLLEQYFLKTPKPSLIERQELSKKLKSSMTPRELQIWFQNKRQSLRR) is a DNA-binding region (homeobox).

In terms of assembly, component of the MBF transcription factor complex. Post-translationally, phosphorylated in response to hydroxyurea. Phosphorylation inhibits the repressor activity and is dependent on rad3. However, the regulation of yox1 by rad3 is probably indirect.

It localises to the nucleus. Its function is as follows. Negative regulatory component of the MBF transcription factor complex involved in cell-cycle G1/S phase-specific gene expression and more particularly DNA replication checkpoint-dependent gene expression. In Schizosaccharomyces pombe (strain 972 / ATCC 24843) (Fission yeast), this protein is MBF complex negative regulatory component yox1 (yox1).